A 303-amino-acid polypeptide reads, in one-letter code: 3-methyl-2-oxobutanoate hydroxymethyltransferase (303 aa).

Positions 1-10 are enriched in polar residues; sequence MDSSGTVRNQ. The tract at residues 1–41 is disordered; it reads MDSSGTVRNQTSDDHSRPADAAGTAATLYGAPAETRSPRRS. D84 and D123 together coordinate Mg(2+). 3-methyl-2-oxobutanoate contacts are provided by residues 84-85, D123, and K153; that span reads DS. E155 contacts Mg(2+). E221 functions as the Proton acceptor in the catalytic mechanism.

Belongs to the PanB family. Homodecamer; pentamer of dimers. Requires Mg(2+) as cofactor.

It localises to the cytoplasm. The catalysed reaction is 3-methyl-2-oxobutanoate + (6R)-5,10-methylene-5,6,7,8-tetrahydrofolate + H2O = 2-dehydropantoate + (6S)-5,6,7,8-tetrahydrofolate. Its pathway is cofactor biosynthesis; (R)-pantothenate biosynthesis; (R)-pantoate from 3-methyl-2-oxobutanoate: step 1/2. Its function is as follows. Catalyzes the reversible reaction in which hydroxymethyl group from 5,10-methylenetetrahydrofolate is transferred onto alpha-ketoisovalerate to form ketopantoate. In Frankia alni (strain DSM 45986 / CECT 9034 / ACN14a), this protein is 3-methyl-2-oxobutanoate hydroxymethyltransferase.